The following is a 492-amino-acid chain: Adenosylhomocysteinase (492 aa).

The substrate site is built by T68, D153, and E215. 216–218 (TTT) is an NAD(+) binding site. Positions 245 and 249 each coordinate substrate. Residues N250, 279-284 (GYGDVG), E302, N337, 358-360 (IGH), and N406 each bind NAD(+).

The protein belongs to the adenosylhomocysteinase family. Requires NAD(+) as cofactor.

It is found in the cytoplasm. The catalysed reaction is S-adenosyl-L-homocysteine + H2O = L-homocysteine + adenosine. It participates in amino-acid biosynthesis; L-homocysteine biosynthesis; L-homocysteine from S-adenosyl-L-homocysteine: step 1/1. Its function is as follows. May play a key role in the regulation of the intracellular concentration of adenosylhomocysteine. The polypeptide is Adenosylhomocysteinase (Mycobacterium marinum (strain ATCC BAA-535 / M)).